The chain runs to 85 residues: Large ribosomal subunit protein bL27 (85 aa).

The tract at residues 1 to 20 (MATKKAGGSTRNGRDSEAKR) is disordered.

Belongs to the bacterial ribosomal protein bL27 family.

This is Large ribosomal subunit protein bL27 from Pasteurella multocida (strain Pm70).